Here is a 186-residue protein sequence, read N- to C-terminus: Peptide deformylase 2 (186 aa).

2 residues coordinate Fe cation: C104 and H146. E147 is a catalytic residue. H150 is a Fe cation binding site.

It belongs to the polypeptide deformylase family. The cofactor is Fe(2+).

It catalyses the reaction N-terminal N-formyl-L-methionyl-[peptide] + H2O = N-terminal L-methionyl-[peptide] + formate. In terms of biological role, removes the formyl group from the N-terminal Met of newly synthesized proteins. Requires at least a dipeptide for an efficient rate of reaction. N-terminal L-methionine is a prerequisite for activity but the enzyme has broad specificity at other positions. The polypeptide is Peptide deformylase 2 (Streptomyces avermitilis (strain ATCC 31267 / DSM 46492 / JCM 5070 / NBRC 14893 / NCIMB 12804 / NRRL 8165 / MA-4680)).